Reading from the N-terminus, the 400-residue chain is Lysophospholipid transporter LplT (400 aa).

A run of 12 helical transmembrane segments spans residues 19 to 39 (VIVAQFLSAFGDNALLFATLA), 53 to 73 (VLQMVFVGAYILFAPFVGQIA), 91 to 111 (AGAAGICLGVNPFVGYTLVGI), 139 to 159 (LMEASTIAAILLGSVAGGVLA), 164 to 184 (IAALVACALAYAGAVAANLFI), 195 to 213 (SWRLSAMTRSFFCACVVLW), 227 to 247 (LFWGAGVTLRFLLVLWVPVAL), 257 to 277 (YLNAMVAVGIVVGAGAAAKLV), 281 to 301 (TVSRCMPAGILIGVVVAIFSL), 304 to 324 (ALLPAYALLLLIGMLGGFFVV), 352 to 372 (NSAMLLMLGLYSLAVLVGVPA), and 373 to 393 (VAIGIGFGVLFALAIAALWIW).

This sequence belongs to the major facilitator superfamily. LplT (TC 2.A.1.42) family.

The protein resides in the cell inner membrane. Its function is as follows. Catalyzes the facilitated diffusion of 2-acyl-glycero-3-phosphoethanolamine (2-acyl-GPE) into the cell. This Salmonella typhi protein is Lysophospholipid transporter LplT.